Consider the following 141-residue polypeptide: MLMPKRTKFRKQMKGRNRGKSFRGNSLAFGDIGIKATEHGRIDSRQIEAARIAMTRHIKRAGKIWIRVFPDKPLTAKPLETRMGKGKGSVDKWVMNIQPGRIVYEMAGIEEELAREALALAQSKLPFKTKIVTSESENEIY.

The segment covering 1-21 (MLMPKRTKFRKQMKGRNRGKS) has biased composition (basic residues). The interval 1-22 (MLMPKRTKFRKQMKGRNRGKSF) is disordered.

It belongs to the universal ribosomal protein uL16 family. In terms of assembly, part of the 50S ribosomal subunit.

Its function is as follows. Binds 23S rRNA and is also seen to make contacts with the A and possibly P site tRNAs. The chain is Large ribosomal subunit protein uL16 from Wolinella succinogenes (strain ATCC 29543 / DSM 1740 / CCUG 13145 / JCM 31913 / LMG 7466 / NCTC 11488 / FDC 602W) (Vibrio succinogenes).